A 448-amino-acid polypeptide reads, in one-letter code: MEAEGMLPPQSLSAKFEGSFAYLTVRDRLPTILTKVVDTLHRNKDNFYKEYGEEGTEAEKRAISFLSRLRNELQTDKPVLALTDNAEDTQAWNEYMERQQDLMENGQLVSWFKSPWLYVECYMYRRIQEALYMNPPMHNFDPFKEGKTQSYFESQQAIKYLCTYLQELITNMENMTEIQLRENFLKLIQVSLWGNKCDLSISAGQDNSQKLSPIDSLPDLQRFILVDDSSMVWSTLVASQGSRSSGMKHARVDIILDNAGFELVTDLVLADFLISSGLAKQIRFHGKSIPWFVSDVTKQDFEWTIKQTMAANHKWMSASGVQWKHFMKEGTWSYHDHPFWTLPHEFCDMTVDAANLYSTLQTSDLILFKGDLNYRKLTGDRKWEHTVRFDQALRGFQPAPLCSLRTLKADVQVGLQAGHAEKLSTQDPDWMTNGKYAVVQFSSPHREQ.

2 residues coordinate Mn(2+): D257 and N258. Substrate is bound at residue D257–N258. S-adenosyl-L-methionine contacts are provided by E262 and D295. D295 is a binding site for Mn(2+). Substrate is bound by residues D371–R375 and K408. The Subfamily III RTxK motif motif lies at R405–K408.

Belongs to the damage-control phosphatase family. Sugar phosphate phosphatase III subfamily. It depends on Mn(2+) as a cofactor. The cofactor is Ni(2+). Automethylated.

The catalysed reaction is beta-D-fructose 1-phosphate + H2O = D-fructose + phosphate. It catalyses the reaction beta-D-fructose 6-phosphate = dihydroxyacetone + D-glyceraldehyde 3-phosphate. The enzyme catalyses L-glutamyl-[protein] + S-adenosyl-L-methionine = [protein]-L-glutamate 5-O-methyl ester + S-adenosyl-L-homocysteine. Metal-dependent phosphatase that shows phosphatase activity against several substrates, including fructose-1-phosphate and fructose-6-phosphate. Its preference for fructose-1-phosphate, a strong glycating agent that causes DNA damage rather than a canonical yeast metabolite, suggests a damage-control function in hexose phosphate metabolism. Has also been shown to have O-methyltransferase activity that methylates glutamate residues of target proteins to form gamma-glutamyl methyl ester residues. Possibly methylates PCNA, suggesting it is involved in the DNA damage response. The polypeptide is Damage-control phosphatase ARMT1 (Danio rerio (Zebrafish)).